We begin with the raw amino-acid sequence, 455 residues long: Protein 60A (455 aa).

The signal sequence occupies residues 1–36; the sequence is MSGLRNTSEAVAVLASLGLGMVLLMFVATTPPAVEA. Residues 37–335 constitute a propeptide that is removed on maturation; sequence TQSGIYIDNG…SASHPRKRKK (299 aa). Residues 108–118 show a composition bias toward acidic residues; the sequence is GLSDQDEDDDY. The tract at residues 108–138 is disordered; it reads GLSDQDEDDDYERGHRSRRSADLEEDEGEQQ. Asn238 and Asn250 each carry an N-linked (GlcNAc...) asparagine glycan. The disordered stretch occupies residues 316–345; it reads AHSSHHRSKRSASHPRKRKKSVSPNNVPLL. Basic residues predominate over residues 318–336; that stretch reads SSHHRSKRSASHPRKRKKS. 3 disulfide bridges follow: Cys354–Cys420, Cys383–Cys452, and Cys387–Cys454. Asn396 carries an N-linked (GlcNAc...) asparagine glycan.

This sequence belongs to the TGF-beta family. As to quaternary structure, homodimer; disulfide-linked. Interacts with nord and dpp. Expressed in cells of the developing foregut and hindgut during germ band retraction and later embryonic stages. Expressed in the wing disk, mainly in the posterior compartment in the pteropleural and medial regions extending into the progenitors of the scutellum. High levels are found within the posterior and anterior compartments of the wing pouch and low levels in the hinge region. In the eye/antennal disk, expression is highest anterior to the morphogenetic furrow and in the medial regions with lower levels of expression posterior to the morphogenetic furrow. Expressed throughout the posterior compartment of the leg imaginal disks and within the ventral anterior compartment.

The protein localises to the secreted. Functionally, required for the growth of imaginal tissues and for patterning of the adult wing. In Drosophila melanogaster (Fruit fly), this protein is Protein 60A (gbb).